We begin with the raw amino-acid sequence, 398 residues long: MAYNHFSIPKNIEEKENSFFDVTFQDEPDETTSTATGIAKVSIPTPKPSTPLSTLTNGSTIQQSMTNQPEPTSQVPPISAKPPMDDATYATQQLTLRALLSTREAGIIIGKAGKNVAELRSTTNVKAGVTKAVPNVHDRVLTISGPLENVVRAYRFIIDIFAKNSTNPDGTPSDANTPRKLRLLIAHSLMGSIIGRNGLRIKLIQDKCSCRMIASKDMLPQSTERTVEIHGTVDNLHAAIWEIGKCLIDDWERGAGTVFYNPVSRLTQPLPSLASTASPQQVSPPAAPSTTSGEAIPENFVSYGAQVFPATQMPFLQQPKVTQNISIPADMVGCIIGRGGSKISEIRRTSGSKISIAKEPHDETGERMFTITGTHEENEKALFLLYQQLEMEKDRRSH.

A disordered region spans residues 40–78 (KVSIPTPKPSTPLSTLTNGSTIQQSMTNQPEPTSQVPPI). At threonine 50 the chain carries Phosphothreonine. Polar residues predominate over residues 57–76 (NGSTIQQSMTNQPEPTSQVP). KH domains follow at residues 93–157 (QLTL…YRFI) and 178–243 (PRKL…IWEI). Over residues 274-290 (ASTASPQQVSPPAAPST) the composition is skewed to low complexity. The disordered stretch occupies residues 274-295 (ASTASPQQVSPPAAPSTTSGEA). Residues 320–385 (KVTQNISIPA…EENEKALFLL (66 aa)) enclose the KH 3 domain.

Phosphorylated by pmk1. Phosphorylation causes enhancement of the RNA-binding activity.

It is found in the cytoplasm. Binds and stabilizes pmp1 mRNA and hence acts as a negative regulator of pmk1 signaling. Overexpression suppresses the Cl(-) sensitivity of calcineurin deletion. This Schizosaccharomyces pombe (strain 972 / ATCC 24843) (Fission yeast) protein is RNA-binding protein rnc1.